A 267-amino-acid polypeptide reads, in one-letter code: Putative [LysW]-aminoadipate/[LysW]-glutamate kinase (267 aa).

Substrate is bound by residues 37–38 (GG), Arg-64, and Asn-169.

This sequence belongs to the acetylglutamate kinase family. LysZ subfamily.

The protein resides in the cytoplasm. It catalyses the reaction [amino-group carrier protein]-C-terminal-N-(1,4-dicarboxybutan-1-yl)-L-glutamine + ATP = [amino-group carrier protein]-C-terminal-N-(1-carboxy-5-phosphooxy-5-oxopentan-1-yl)-L-glutamine + ADP. The enzyme catalyses [amino-group carrier protein]-C-terminal-gamma-(L-glutamyl)-L-glutamate + ATP = [amino-group carrier protein]-C-terminal-gamma-(5-phospho-L-glutamyl)-L-glutamate + ADP. Its pathway is amino-acid biosynthesis; L-lysine biosynthesis via AAA pathway; L-lysine from L-alpha-aminoadipate (Thermus route): step 2/5. The protein operates within amino-acid biosynthesis; L-arginine biosynthesis. Its function is as follows. Involved in both the arginine and lysine biosynthetic pathways. Phosphorylates the LysW-bound precursors glutamate (for arginine biosynthesis), respectively alpha-aminoadipate (for lysine biosynthesis). This chain is Putative [LysW]-aminoadipate/[LysW]-glutamate kinase, found in Nitrosopumilus maritimus (strain SCM1).